Reading from the N-terminus, the 121-residue chain is Putative inactive aspartokinase 3 HI_1632 (121 aa).

The protein belongs to the aspartokinase family.

The polypeptide is Putative inactive aspartokinase 3 HI_1632 (Haemophilus influenzae (strain ATCC 51907 / DSM 11121 / KW20 / Rd)).